The primary structure comprises 72 residues: Small, acid-soluble spore protein C (72 aa).

This sequence belongs to the alpha/beta-type SASP family.

Functionally, SASP are bound to spore DNA. They are double-stranded DNA-binding proteins that cause DNA to change to an a-like conformation. They protect the DNA backbone from chemical and enzymatic cleavage and are thus involved in dormant spore's high resistance to UV light. The chain is Small, acid-soluble spore protein C (sasP-C) from Priestia megaterium (Bacillus megaterium).